A 392-amino-acid polypeptide reads, in one-letter code: Chloramphenicol resistance protein (392 aa).

The next 12 membrane-spanning stretches (helical) occupy residues 6–26, 42–62, 71–91, 100–120, 129–149, 160–180, 205–225, 239–259, 268–288, 294–314, 332–352, and 358–378; these read YLLA…AGLV, TLTS…AALA, LLGF…TTSF, VAAL…AALV, LAVL…GGSL, FWAV…AIPA, LLLA…SFTF, LWIS…VTVA, AQVL…LAML, ALLT…STLI, ATAA…TTLG, and LGPL…AFPF.

The protein belongs to the major facilitator superfamily.

It localises to the cell membrane. The protein is Chloramphenicol resistance protein (cmlR) of Streptomyces lividans.